We begin with the raw amino-acid sequence, 518 residues long: 2-isopropylmalate synthase (518 aa).

The Pyruvate carboxyltransferase domain occupies 24 to 275 (VYIFDTTLRD…KTNIKTQKLY (252 aa)). D33, H213, H215, and N249 together coordinate a divalent metal cation.

The protein belongs to the alpha-IPM synthase/homocitrate synthase family. In terms of assembly, homodimer. A divalent metal cation serves as cofactor.

The enzyme catalyses 3-methyl-2-oxobutanoate + acetyl-CoA + H2O = (2S)-2-isopropylmalate + CoA + H(+). It participates in amino-acid biosynthesis; L-leucine biosynthesis; L-leucine from 3-methyl-2-oxobutanoate: step 1/4. Its function is as follows. Catalyzes the condensation of the acetyl group of acetyl-CoA with 3-methyl-2-oxobutanoate (2-oxoisovalerate) to form 3-carboxy-3-hydroxy-4-methylpentanoate (2-isopropylmalate). This chain is 2-isopropylmalate synthase (leuA), found in Methanocaldococcus jannaschii (strain ATCC 43067 / DSM 2661 / JAL-1 / JCM 10045 / NBRC 100440) (Methanococcus jannaschii).